The sequence spans 268 residues: 3-methyl-2-oxobutanoate hydroxymethyltransferase (268 aa).

Mg(2+) is bound by residues aspartate 46 and aspartate 85. 3-methyl-2-oxobutanoate contacts are provided by residues 46 to 47 (DS), aspartate 85, and lysine 115. Glutamate 117 contacts Mg(2+). Glutamate 184 (proton acceptor) is an active-site residue.

It belongs to the PanB family. Homodecamer; pentamer of dimers. Mg(2+) is required as a cofactor.

The protein resides in the cytoplasm. It carries out the reaction 3-methyl-2-oxobutanoate + (6R)-5,10-methylene-5,6,7,8-tetrahydrofolate + H2O = 2-dehydropantoate + (6S)-5,6,7,8-tetrahydrofolate. Its pathway is cofactor biosynthesis; (R)-pantothenate biosynthesis; (R)-pantoate from 3-methyl-2-oxobutanoate: step 1/2. Functionally, catalyzes the reversible reaction in which hydroxymethyl group from 5,10-methylenetetrahydrofolate is transferred onto alpha-ketoisovalerate to form ketopantoate. The sequence is that of 3-methyl-2-oxobutanoate hydroxymethyltransferase from Magnetococcus marinus (strain ATCC BAA-1437 / JCM 17883 / MC-1).